Consider the following 796-residue polypeptide: U-box domain-containing protein 51 (796 aa).

Disordered regions lie at residues 163–195 (DMDTETSIADDRSESRFSSDSHSGTVSSTSSHQ), 218–240 (TNIGKQNNEPHHHHHNRAGSLDV), and 270–292 (RSSQMEEASSSSTYSDPTSSSSQ). The segment covering 171–181 (ADDRSESRFSS) has biased composition (basic and acidic residues). The segment covering 182–195 (DSHSGTVSSTSSHQ) has biased composition (low complexity). The segment covering 270–291 (RSSQMEEASSSSTYSDPTSSSS) has biased composition (low complexity). Residues 298 to 407 (ELEKLKIELR…QRLEDALEGG (110 aa)) are a coiled coil. The region spanning 429-700 (FSDELKIGVG…DLGKEILPVL (272 aa)) is the Protein kinase domain. ATP-binding positions include 435-443 (IGVGGYGSV) and Lys456. Asp557 acts as the Proton acceptor in catalysis. The U-box domain occupies 724 to 796 (NAPTHFYCPI…IKEWRSQLIK (73 aa)).

It belongs to the protein kinase superfamily. Ser/Thr protein kinase family.

It carries out the reaction L-seryl-[protein] + ATP = O-phospho-L-seryl-[protein] + ADP + H(+). It catalyses the reaction L-threonyl-[protein] + ATP = O-phospho-L-threonyl-[protein] + ADP + H(+). The enzyme catalyses S-ubiquitinyl-[E2 ubiquitin-conjugating enzyme]-L-cysteine + [acceptor protein]-L-lysine = [E2 ubiquitin-conjugating enzyme]-L-cysteine + N(6)-ubiquitinyl-[acceptor protein]-L-lysine.. Its pathway is protein modification; protein ubiquitination. Functions as an E3 ubiquitin ligase. The chain is U-box domain-containing protein 51 (PUB51) from Arabidopsis thaliana (Mouse-ear cress).